The chain runs to 464 residues: Chromosomal replication initiator protein DnaA (464 aa).

The domain I, interacts with DnaA modulators stretch occupies residues 1-90 (MNNDNTEVLE…KYWQDEDQSI (90 aa)). Residues 90–126 (ICSVDICVVSNQDPNLLVDIKDRVDRGIKGNCDNVSS) form a domain II region. Residues 127 to 345 (PLDPRFTFDN…GALNKVVAHS (219 aa)) are domain III, AAA+ region. Residues G173, G175, K176, and T177 each coordinate ATP. The interval 346-464 (SLVGCSITLD…DINLLNRMLR (119 aa)) is domain IV, binds dsDNA.

The protein belongs to the DnaA family. In terms of assembly, oligomerizes as a right-handed, spiral filament on DNA at oriC.

It is found in the cytoplasm. Its function is as follows. Plays an essential role in the initiation and regulation of chromosomal replication. ATP-DnaA binds to the origin of replication (oriC) to initiate formation of the DNA replication initiation complex once per cell cycle. Binds the DnaA box (a 9 base pair repeat at the origin) and separates the double-stranded (ds)DNA. Forms a right-handed helical filament on oriC DNA; dsDNA binds to the exterior of the filament while single-stranded (ss)DNA is stabiized in the filament's interior. The ATP-DnaA-oriC complex binds and stabilizes one strand of the AT-rich DNA unwinding element (DUE), permitting loading of DNA polymerase. After initiation quickly degrades to an ADP-DnaA complex that is not apt for DNA replication. Binds acidic phospholipids. In Ehrlichia ruminantium (strain Gardel), this protein is Chromosomal replication initiator protein DnaA.